The sequence spans 152 residues: Transcriptional regulator MraZ (152 aa).

SpoVT-AbrB domains follow at residues 5 to 52 (ASAI…PLHE) and 81 to 124 (AQDC…EESA).

It belongs to the MraZ family. Forms oligomers.

The protein resides in the cytoplasm. It is found in the nucleoid. The chain is Transcriptional regulator MraZ from Shewanella frigidimarina (strain NCIMB 400).